The following is a 357-amino-acid chain: Homoarginine-6-hydroxylase 2-ODD-C23.2 (357 aa).

One can recognise a Fe2OG dioxygenase domain in the interval 208–308 (PFWVMRIIGY…RVCVAFFYET (101 aa)). Fe cation is bound by residues H231, D233, and H289. Residue R299 participates in 2-oxoglutarate binding.

The protein belongs to the iron/ascorbate-dependent oxidoreductase family. Requires Fe(2+) as cofactor. In terms of tissue distribution, expressed in senescent leaves.

It is found in the cytoplasm. Its subcellular location is the cytosol. The enzyme catalyses L-homoarginine + 2-oxoglutarate + O2 = 6-hydroxy-L-homoarginine + succinate + CO2. It carries out the reaction L-arginine + 2-oxoglutarate + O2 = 5-hydroxy-L-arginine + succinate + CO2. Slightly inhibited by canavanine (Can), the 5-oxa-analog of arginine. Functionally, 2-oxoglutarate-dependent dioxygenase catalyzing homoarginine 6-hydroxylation and arginine-5-hydroxylation thus producing 6-hydroxy-L-homoarginine and 5-hydroxy-L-arginine, respectively. Guanidine (Gd) is in turn synthesized by the spontaneous conversion of 6-hydroxy-L-homoarginine and 5-hydroxy-L-arginine to (S)-2-amino-6-oxohexanoate (RHEA:79843) and L-glutamate 5-semialdehyde (RHEA:31527); guanidine is a nitrogen-rich compound that may serve as a defense or signaling substance. The protein is Homoarginine-6-hydroxylase 2-ODD-C23.2 of Arabidopsis thaliana (Mouse-ear cress).